Here is a 412-residue protein sequence, read N- to C-terminus: Putative competence-damage inducible protein (412 aa).

This sequence belongs to the CinA family.

This is Putative competence-damage inducible protein from Bacillus cereus (strain Q1).